Here is a 201-residue protein sequence, read N- to C-terminus: 3-isopropylmalate dehydratase small subunit (201 aa).

The protein belongs to the LeuD family. LeuD type 1 subfamily. In terms of assembly, heterodimer of LeuC and LeuD.

It carries out the reaction (2R,3S)-3-isopropylmalate = (2S)-2-isopropylmalate. The protein operates within amino-acid biosynthesis; L-leucine biosynthesis; L-leucine from 3-methyl-2-oxobutanoate: step 2/4. In terms of biological role, catalyzes the isomerization between 2-isopropylmalate and 3-isopropylmalate, via the formation of 2-isopropylmaleate. This chain is 3-isopropylmalate dehydratase small subunit, found in Sinorhizobium fredii (strain NBRC 101917 / NGR234).